A 230-amino-acid polypeptide reads, in one-letter code: Ribose-5-phosphate isomerase A (230 aa).

Substrate-binding positions include 31-34 (TGST), 88-91 (DGSD), and 101-104 (KGGG). Glu-110 functions as the Proton acceptor in the catalytic mechanism. Lys-128 contacts substrate.

It belongs to the ribose 5-phosphate isomerase family. Homodimer.

It carries out the reaction aldehydo-D-ribose 5-phosphate = D-ribulose 5-phosphate. It functions in the pathway carbohydrate degradation; pentose phosphate pathway; D-ribose 5-phosphate from D-ribulose 5-phosphate (non-oxidative stage): step 1/1. In terms of biological role, catalyzes the reversible conversion of ribose-5-phosphate to ribulose 5-phosphate. The chain is Ribose-5-phosphate isomerase A from Lactobacillus acidophilus (strain ATCC 700396 / NCK56 / N2 / NCFM).